A 483-amino-acid chain; its full sequence is Phosphomethylpyrimidine synthase (483 aa).

Residues Asn-97, Met-126, Tyr-156, His-192, 212 to 214, 253 to 256, and Glu-292 each bind substrate; these read SRG and DSLR. His-296 serves as a coordination point for Zn(2+). Tyr-319 serves as a coordination point for substrate. Position 360 (His-360) interacts with Zn(2+). Cys-440, Cys-443, and Cys-448 together coordinate [4Fe-4S] cluster.

The protein belongs to the ThiC family. [4Fe-4S] cluster serves as cofactor.

It carries out the reaction 5-amino-1-(5-phospho-beta-D-ribosyl)imidazole + S-adenosyl-L-methionine = 4-amino-2-methyl-5-(phosphooxymethyl)pyrimidine + CO + 5'-deoxyadenosine + formate + L-methionine + 3 H(+). It participates in cofactor biosynthesis; thiamine diphosphate biosynthesis. In terms of biological role, catalyzes the synthesis of the hydroxymethylpyrimidine phosphate (HMP-P) moiety of thiamine from aminoimidazole ribotide (AIR) in a radical S-adenosyl-L-methionine (SAM)-dependent reaction. This chain is Phosphomethylpyrimidine synthase, found in Parasynechococcus marenigrum (strain WH8102).